The chain runs to 333 residues: MPSGGNGTSNGVANANSTGNAGTSGNVPIYKPYRHLKTLEGHTAAISCVKFSNDGNLLASASVDKTMILWSATNYSLIHRYEGHSSGISDLAWSSDSHYTCSASDDCTLRIWDARSPYECLKVLRGHTNFVFCVNFNPPSNLIVSGSFDETIRIWEVKTGKCVRMIKAHSMPISSVHFNRDGSLIVSASHDGSCKIWDAKEGTCLKTLIDDKSPAVSFAKFSPNGKFILVATLDSTLKLSNYATGKFLKVYTGHTNKVFCITSAFSVTNGKYIVSGSEDNCVYLWDLQARNILQRLEGHTDAVISVSCHPVQNEISSSGNHLDKTIRIWKQDA.

WD repeat units follow at residues 1–40 (MPSG…KTLE), 41–80 (GHTA…LIHR), 83–122 (GHSS…ECLK), 126–167 (GHTN…RMIK), 169–207 (HSMP…CLKT), 211–252 (DKSP…KVYT), 253–295 (GHTN…ILQR), and 298–333 (GHTD…KQDA).

Unlike WDR5A, does not interact with RBL or TRO.

In Arabidopsis thaliana (Mouse-ear cress), this protein is COMPASS-like H3K4 histone methylase component WDR5B.